Consider the following 154-residue polypeptide: Mating pheromone 2 (154 aa).

The N-terminal stretch at 1–16 (MKAIFIILAILMVTQA) is a signal peptide. Residues 17 to 52 (FKMTSKVNTKLQSQIQSKFQSKNKLASTFQTSSQLK) constitute a propeptide that is removed on maturation.

It localises to the secreted. Mating ciliate pheromones (or gamones) are diffusible extracellular communication signals that distinguish different intraspecific classes of cells commonly referred to as 'mating types'. They prepare the latter for conjugation by changing their cell surface properties. The chain is Mating pheromone 2 from Euplotoides octocarinatus (Freshwater ciliate).